Here is a 380-residue protein sequence, read N- to C-terminus: Chaperone protein DnaJ (380 aa).

In terms of domain architecture, J spans 5-72; it reads DFYEVLGVAK…NKRAAYDQYG (68 aa). The CR-type zinc finger occupies 140 to 218; sequence GKDAQIRIPS…CGGQGKVKRQ (79 aa). Zn(2+)-binding residues include Cys153, Cys156, Cys170, Cys173, Cys192, Cys195, Cys206, and Cys209. 4 CXXCXGXG motif repeats span residues 153–160, 170–177, 192–199, and 206–213; these read CDTCHGSG, CTTCNGMG, CPHCRGTG, and CTSCGGQG. Residues 359 to 380 form a disordered region; the sequence is KGGAKHSPSGESWTDRLKSFFS. Basic and acidic residues predominate over residues 371-380; that stretch reads WTDRLKSFFS.

The protein belongs to the DnaJ family. As to quaternary structure, homodimer. Zn(2+) serves as cofactor.

The protein resides in the cytoplasm. Functionally, participates actively in the response to hyperosmotic and heat shock by preventing the aggregation of stress-denatured proteins and by disaggregating proteins, also in an autonomous, DnaK-independent fashion. Unfolded proteins bind initially to DnaJ; upon interaction with the DnaJ-bound protein, DnaK hydrolyzes its bound ATP, resulting in the formation of a stable complex. GrpE releases ADP from DnaK; ATP binding to DnaK triggers the release of the substrate protein, thus completing the reaction cycle. Several rounds of ATP-dependent interactions between DnaJ, DnaK and GrpE are required for fully efficient folding. Also involved, together with DnaK and GrpE, in the DNA replication of plasmids through activation of initiation proteins. This Delftia acidovorans (strain DSM 14801 / SPH-1) protein is Chaperone protein DnaJ.